A 451-amino-acid polypeptide reads, in one-letter code: Phosphoglucosamine mutase (451 aa).

Catalysis depends on S101, which acts as the Phosphoserine intermediate. Positions 101, 240, 242, and 244 each coordinate Mg(2+). S101 bears the Phosphoserine mark.

It belongs to the phosphohexose mutase family. Mg(2+) is required as a cofactor. In terms of processing, activated by phosphorylation.

The catalysed reaction is alpha-D-glucosamine 1-phosphate = D-glucosamine 6-phosphate. In terms of biological role, catalyzes the conversion of glucosamine-6-phosphate to glucosamine-1-phosphate. This chain is Phosphoglucosamine mutase, found in Streptococcus pyogenes serotype M2 (strain MGAS10270).